The primary structure comprises 157 residues: E3 ubiquitin-protein ligase RHA1B (157 aa).

Residues 85 to 129 (CTVCLSDFVSDDKIRQLPKCGHVFHHRCLDRWIVDCNKITCPICR) form an RING-type; atypical zinc finger.

It catalyses the reaction S-ubiquitinyl-[E2 ubiquitin-conjugating enzyme]-L-cysteine + [acceptor protein]-L-lysine = [E2 ubiquitin-conjugating enzyme]-L-cysteine + N(6)-ubiquitinyl-[acceptor protein]-L-lysine.. The protein operates within protein modification; protein ubiquitination. Functionally, possesses E3 ubiquitin-protein ligase activity when associated with the E2 enzyme UBC8 in vitro. This chain is E3 ubiquitin-protein ligase RHA1B, found in Arabidopsis thaliana (Mouse-ear cress).